We begin with the raw amino-acid sequence, 176 residues long: ATP-dependent protease subunit HslV (176 aa).

The active site involves Thr-4. 3 residues coordinate Na(+): Ala-159, Cys-162, and Thr-165.

This sequence belongs to the peptidase T1B family. HslV subfamily. A double ring-shaped homohexamer of HslV is capped on each side by a ring-shaped HslU homohexamer. The assembly of the HslU/HslV complex is dependent on binding of ATP.

The protein resides in the cytoplasm. It carries out the reaction ATP-dependent cleavage of peptide bonds with broad specificity.. Its activity is regulated as follows. Allosterically activated by HslU binding. Its function is as follows. Protease subunit of a proteasome-like degradation complex believed to be a general protein degrading machinery. This chain is ATP-dependent protease subunit HslV, found in Wolbachia sp. subsp. Brugia malayi (strain TRS).